A 176-amino-acid chain; its full sequence is NAD(P)H-quinone oxidoreductase subunit J (176 aa).

A compositionally biased stretch (polar residues) spans 1 to 10 (MSETPTSPNQ). The interval 1-22 (MSETPTSPNQDLPEAPQAGPLS) is disordered.

This sequence belongs to the complex I 30 kDa subunit family. NDH-1 can be composed of about 15 different subunits; different subcomplexes with different compositions have been identified which probably have different functions.

It is found in the cellular thylakoid membrane. It carries out the reaction a plastoquinone + NADH + (n+1) H(+)(in) = a plastoquinol + NAD(+) + n H(+)(out). The catalysed reaction is a plastoquinone + NADPH + (n+1) H(+)(in) = a plastoquinol + NADP(+) + n H(+)(out). Its function is as follows. NDH-1 shuttles electrons from an unknown electron donor, via FMN and iron-sulfur (Fe-S) centers, to quinones in the respiratory and/or the photosynthetic chain. The immediate electron acceptor for the enzyme in this species is believed to be plastoquinone. Couples the redox reaction to proton translocation, and thus conserves the redox energy in a proton gradient. Cyanobacterial NDH-1 also plays a role in inorganic carbon-concentration. The chain is NAD(P)H-quinone oxidoreductase subunit J from Synechococcus sp. (strain RCC307).